A 257-amino-acid chain; its full sequence is UPF0246 protein Daro_2893 (257 aa).

It belongs to the UPF0246 family.

This chain is UPF0246 protein Daro_2893, found in Dechloromonas aromatica (strain RCB).